Consider the following 116-residue polypeptide: Large ribosomal subunit protein uL24 (116 aa).

It belongs to the universal ribosomal protein uL24 family. In terms of assembly, part of the 50S ribosomal subunit.

Its function is as follows. One of two assembly initiator proteins, it binds directly to the 5'-end of the 23S rRNA, where it nucleates assembly of the 50S subunit. In terms of biological role, located at the polypeptide exit tunnel on the outside of the subunit. The chain is Large ribosomal subunit protein uL24 from Methanothrix thermoacetophila (strain DSM 6194 / JCM 14653 / NBRC 101360 / PT) (Methanosaeta thermophila).